A 206-amino-acid polypeptide reads, in one-letter code: Proteasome subunit beta 1 (206 aa).

Positions 1–14 are cleaved as a propeptide — removed in mature form; by autocatalysis; that stretch reads MSRIHNDPKVLLTG. The active-site Nucleophile is the Thr15.

It belongs to the peptidase T1B family. In terms of assembly, the 20S proteasome core is composed of 14 alpha and 14 beta subunits that assemble into four stacked heptameric rings, resulting in a barrel-shaped structure. The two inner rings, each composed of seven catalytic beta subunits, are sandwiched by two outer rings, each composed of seven alpha subunits. The catalytic chamber with the active sites is on the inside of the barrel. Has a gated structure, the ends of the cylinder being occluded by the N-termini of the alpha-subunits. Is capped at one or both ends by the proteasome regulatory ATPase, PAN.

Its subcellular location is the cytoplasm. It carries out the reaction Cleavage of peptide bonds with very broad specificity.. With respect to regulation, the formation of the proteasomal ATPase PAN-20S proteasome complex, via the docking of the C-termini of PAN into the intersubunit pockets in the alpha-rings, triggers opening of the gate for substrate entry. Interconversion between the open-gate and close-gate conformations leads to a dynamic regulation of the 20S proteasome proteolysis activity. Its function is as follows. Component of the proteasome core, a large protease complex with broad specificity involved in protein degradation. In Caldivirga maquilingensis (strain ATCC 700844 / DSM 13496 / JCM 10307 / IC-167), this protein is Proteasome subunit beta 1.